A 327-amino-acid polypeptide reads, in one-letter code: Undecaprenyl-phosphate 4-deoxy-4-formamido-L-arabinose transferase (327 aa).

2 helical membrane passes run 236–256 (LSIF…LLVV) and 270–290 (VFML…GMGL).

The protein belongs to the glycosyltransferase 2 family.

The protein localises to the cell inner membrane. It catalyses the reaction UDP-4-deoxy-4-formamido-beta-L-arabinose + di-trans,octa-cis-undecaprenyl phosphate = 4-deoxy-4-formamido-alpha-L-arabinopyranosyl di-trans,octa-cis-undecaprenyl phosphate + UDP. It functions in the pathway glycolipid biosynthesis; 4-amino-4-deoxy-alpha-L-arabinose undecaprenyl phosphate biosynthesis; 4-amino-4-deoxy-alpha-L-arabinose undecaprenyl phosphate from UDP-4-deoxy-4-formamido-beta-L-arabinose and undecaprenyl phosphate: step 1/2. Its pathway is bacterial outer membrane biogenesis; lipopolysaccharide biosynthesis. In terms of biological role, catalyzes the transfer of 4-deoxy-4-formamido-L-arabinose from UDP to undecaprenyl phosphate. The modified arabinose is attached to lipid A and is required for resistance to polymyxin and cationic antimicrobial peptides. The polypeptide is Undecaprenyl-phosphate 4-deoxy-4-formamido-L-arabinose transferase (Klebsiella pneumoniae (strain 342)).